A 115-amino-acid chain; its full sequence is MSYEYDDELEEIRRRKMLELQRRLEEERRREEEQARLRAQKDAILRRLLTSKARERLANLRLVRPEIAEAAENAVIQLVQTGRITPPVDDDTLVQILLELDRSTRRDFEIRIKRK.

It belongs to the PDCD5 family.

This is DNA-binding protein APE_1087b from Aeropyrum pernix (strain ATCC 700893 / DSM 11879 / JCM 9820 / NBRC 100138 / K1).